The sequence spans 221 residues: Probable septum site-determining protein MinC (221 aa).

It belongs to the MinC family. In terms of assembly, interacts with MinD and FtsZ.

Functionally, cell division inhibitor that blocks the formation of polar Z ring septums. Rapidly oscillates between the poles of the cell to destabilize FtsZ filaments that have formed before they mature into polar Z rings. Prevents FtsZ polymerization. This is Probable septum site-determining protein MinC from Shewanella oneidensis (strain ATCC 700550 / JCM 31522 / CIP 106686 / LMG 19005 / NCIMB 14063 / MR-1).